The chain runs to 503 residues: Zinc-regulated transporter 3 (503 aa).

3 helical membrane-spanning segments follow: residues Leu-8–Leu-28, Leu-42–Leu-62, and Phe-75–Phe-95. The segment at Gly-112–Pro-171 is disordered. Positions Ile-115–His-126 are enriched in basic residues. The segment covering Ser-127 to Glu-142 has biased composition (basic and acidic residues). 2 positions are modified to phosphoserine: Ser-178 and Ser-188. Disordered stretches follow at residues Gln-221–His-244 and His-274–Pro-295. Positions Pro-280 to Pro-295 are enriched in polar residues. The next 5 helical transmembrane spans lie at Ile-336–Phe-356, Ile-371–Tyr-391, Trp-398–Ile-418, Leu-438–Ile-458, and Gly-482–Phe-502.

The protein belongs to the ZIP transporter (TC 2.A.5) family.

The protein resides in the vacuole membrane. In terms of biological role, transports zinc from storage in the vacuole to the cytoplasm. In Saccharomyces cerevisiae (strain ATCC 204508 / S288c) (Baker's yeast), this protein is Zinc-regulated transporter 3 (ZRT3).